A 216-amino-acid polypeptide reads, in one-letter code: Vascular endothelial growth factor A (216 aa).

An N-terminal signal peptide occupies residues 1-26 (MNFLLTWIHWGLAALLYLQSAELSKA). 3 cysteine pairs are disulfide-bonded: Cys-52-Cys-94, Cys-83-Cys-128, and Cys-87-Cys-130. Asn-101 carries an N-linked (GlcNAc...) asparagine glycan. Over residues 132–141 (PKKDVKNKQE) the composition is skewed to basic and acidic residues. The interval 132–167 (PKKDVKNKQEKKSKRGKGKGQKRKRKKGRYKPPSFH) is disordered. Basic residues predominate over residues 142-161 (KKSKRGKGKGQKRKRKKGRY).

Belongs to the PDGF/VEGF growth factor family. As to quaternary structure, homodimer; disulfide-linked. Also found as heterodimer with PGF.

Functionally, growth factor active in angiogenesis, vasculogenesis and endothelial cell growth. Induces endothelial cell proliferation, promotes cell migration, inhibits apoptosis and induces permeabilization of blood vessels. Binds to the FLT1/VEGFR1 and KDR/VEGFR2 receptors, heparan sulfate and heparin. The sequence is that of Vascular endothelial growth factor A (VEGFA) from Gallus gallus (Chicken).